The primary structure comprises 394 residues: Chalcone synthase 8 (394 aa).

Residue Cys165 is part of the active site.

It belongs to the thiolase-like superfamily. Chalcone/stilbene synthases family.

The enzyme catalyses (E)-4-coumaroyl-CoA + 3 malonyl-CoA + 3 H(+) = 2',4,4',6'-tetrahydroxychalcone + 3 CO2 + 4 CoA. Its pathway is secondary metabolite biosynthesis; flavonoid biosynthesis. The primary product of this enzyme is 4,2',4',6'-tetrahydroxychalcone (also termed naringenin-chalcone or chalcone) which can under specific conditions spontaneously isomerize into naringenin. The sequence is that of Chalcone synthase 8 (CHS8) from Bromheadia finlaysoniana (Orchid).